The sequence spans 834 residues: Protein translocase subunit SecA (834 aa).

ATP is bound by residues Gln85, 103–107, and Asp491; that span reads GEGKT. The Zn(2+) site is built by Cys818, Cys820, Cys829, and Cys830.

This sequence belongs to the SecA family. As to quaternary structure, monomer and homodimer. Part of the essential Sec protein translocation apparatus which comprises SecA, SecYEG and auxiliary proteins SecDF. Other proteins may also be involved. Requires Zn(2+) as cofactor.

It localises to the cell membrane. Its subcellular location is the cytoplasm. The enzyme catalyses ATP + H2O + cellular proteinSide 1 = ADP + phosphate + cellular proteinSide 2.. Its function is as follows. Part of the Sec protein translocase complex. Interacts with the SecYEG preprotein conducting channel. Has a central role in coupling the hydrolysis of ATP to the transfer of proteins into and across the cell membrane, serving as an ATP-driven molecular motor driving the stepwise translocation of polypeptide chains across the membrane. The protein is Protein translocase subunit SecA of Clostridium kluyveri (strain ATCC 8527 / DSM 555 / NBRC 12016 / NCIMB 10680 / K1).